The chain runs to 115 residues: Large ribosomal subunit protein bL20c (115 aa).

The protein belongs to the bacterial ribosomal protein bL20 family.

It is found in the plastid. It localises to the organellar chromatophore. Functionally, binds directly to 23S ribosomal RNA and is necessary for the in vitro assembly process of the 50S ribosomal subunit. It is not involved in the protein synthesizing functions of that subunit. This is Large ribosomal subunit protein bL20c from Paulinella chromatophora.